We begin with the raw amino-acid sequence, 398 residues long: Circumsporozoite protein (398 aa).

A signal peptide spans 1–23 (MKNFNLLAVSSILLVDLFRTQWG). Positions 50 to 110 (AQVRQSASRG…AAAGEAGNNA (61 aa)) are disordered. Over residues 66-93 (PKNEEGADKPKKKDEKQVEPKKPRENKL) the composition is skewed to basic and acidic residues. Residues 81–89 (KQVEPKKPR) form a required for the binding to heparan sulfate proteoglycans (HSPGs) on the surface of host hepatocytes region. The tract at residues 92–96 (KLKQP) is region I; contains the proteolytic cleavage site. 19 consecutive repeat copies span residues 97–105 (AGNNAAAGE), 106–114 (AGNNAAAGE), 115–123 (AGNNAAAGE), 124–132 (AGNNAAAGE), 133–141 (AGNNAAAGE), 142–150 (AGNNAAAGE), 151–159 (AGNNAAGGA), 160–168 (AGNNAAGGE), 169–177 (AGNNAAGGA), 178–186 (AGNNAAAGE), 187–195 (AGNNAAGGE), 196–204 (AGNNAAAGE), 205–213 (AGNNAAGGA), 214–222 (AGNNAAAGE), 223–231 (AGNNAAAGA), 232–240 (AGNNAAAGA), 241–257 (AGNN…GAGR), 258–274 (AGNN…GAGR), and 275–291 (AGNN…GAGG). A compositionally biased stretch (low complexity) spans 97–110 (AGNNAAAGEAGNNA). A 16 X 9 AA tandem repeats of A-G-N-N-A-A-[AG]-G-[EA] region spans residues 97-240 (AGNNAAAGEA…AAGNNAAAGA (144 aa)). Positions 241–291 (AGNNAAAGEAGAGGAGRAGNNAAAGEAGAGGAGRAGNNAAAGEAGAGGAGG) are 3 X 17 AA tandem repeats of A-G-N-N-A-A-A-G-E-A-G-A-G-G-A-G-[RG]. The tract at residues 248 to 310 (GEAGAGGAGR…AGQGQNNGGA (63 aa)) is disordered. Gly residues predominate over residues 284-293 (AGAGGAGGNA). Residues 324–376 (KIRSTIGVEWSPCSVTCGKGVRMRRKVNAANKKPEELDANDLETEVCTMDKCA) enclose the TSP type-1 domain. 2 cysteine pairs are disulfide-bonded: Cys336–Cys370 and Cys340–Cys375. Thr339 carries O-linked (Fuc) threonine glycosylation. Cys375 carries the GPI-anchor amidated cysteine lipid modification. Positions 376–398 (AGIFNVVSNSLGLVILLVLALFN) are cleaved as a propeptide — removed in mature form.

Belongs to the plasmodium circumsporozoite protein family. In terms of processing, during host cell invasion, proteolytically cleaved at the cell membrane in the region I by a papain-like cysteine protease of parasite origin. Cleavage is triggered by the sporozoite contact with highly sulfated heparan sulfate proteoglycans (HSPGs) present on the host hepatocyte cell surface. Cleavage exposes the TSP type-1 (TSR) domain and is required for productive invasion of host hepatocytes but not for adhesion to the host cell membrane. Cleavage is dispensable for sporozoite development in the oocyst, motility and for traversal of host and vector cells. Post-translationally, O-glycosylated; maybe by POFUT2.

It is found in the cell membrane. The protein localises to the cytoplasm. Its function is as follows. Essential sporozoite protein. In the mosquito vector, required for sporozoite development in the oocyst, migration through the vector hemolymph and entry into the vector salivary glands. In the vertebrate host, required for sporozoite migration through the host dermis and infection of host hepatocytes. Binds to highly sulfated heparan sulfate proteoglycans (HSPGs) on the surface of host hepatocytes. Functionally, in the vertebrate host, binds to highly sulfated heparan sulfate proteoglycans (HSPGs) on the surface of host hepatocytes and is required for sporozoite invasion of the host hepatocytes. This chain is Circumsporozoite protein, found in Plasmodium cynomolgi (strain Ceylon).